The primary structure comprises 211 residues: Adenylyl-sulfate kinase (211 aa).

32 to 39 (GLSASGKS) serves as a coordination point for ATP. Serine 107 acts as the Phosphoserine intermediate in catalysis.

The protein belongs to the APS kinase family. Homodimer.

It catalyses the reaction adenosine 5'-phosphosulfate + ATP = 3'-phosphoadenylyl sulfate + ADP + H(+). It participates in sulfur metabolism; hydrogen sulfide biosynthesis; sulfite from sulfate: step 2/3. Catalyzes the synthesis of activated sulfate. This Penicillium chrysogenum (Penicillium notatum) protein is Adenylyl-sulfate kinase.